A 774-amino-acid chain; its full sequence is Subtilisin-like protease SBT3.5 (774 aa).

Residues 1 to 23 form the signal peptide; it reads MRNCRVLLVLVLSLVIVLNVVRA. The propeptide at 24–108 is removed in mature form; that stretch reads SDESKVHIVY…VMADSFYELA (85 aa). In terms of domain architecture, Inhibitor I9 spans 29 to 108; sequence VHIVYLGEKQ…VMADSFYELA (80 aa). The Peptidase S8 domain occupies 112–621; sequence TWDYLGLSVA…GGIVNPEKAA (510 aa). N-linked (GlcNAc...) asparagine glycosylation occurs at Asn-128. Asp-142 (charge relay system) is an active-site residue. Residue Asn-201 is glycosylated (N-linked (GlcNAc...) asparagine). His-217 functions as the Charge relay system in the catalytic mechanism. 4 N-linked (GlcNAc...) asparagine glycosylation sites follow: Asn-232, Asn-394, Asn-409, and Asn-539. A PA domain is found at 383-478; that stretch reads SLVYPENAGF…ELGTDVLLYI (96 aa). Ser-552 (charge relay system) is an active-site residue. N-linked (GlcNAc...) asparagine glycans are attached at residues Asn-644, Asn-654, Asn-725, and Asn-755.

Belongs to the peptidase S8 family. As to expression, expressed in roots, leaves, stems, flower buds, developing siliques and mature seeds.

The protein localises to the secreted. It is found in the cell wall. Serine protease that cleaves the pectin methylesterase 17 (PME17) protein to release the PME17 mature form in the apoplasm. This chain is Subtilisin-like protease SBT3.5, found in Arabidopsis thaliana (Mouse-ear cress).